The sequence spans 726 residues: MPPLDKRIKKFLKDSIRIAPKISGKGELSELRTGLVSQYPQTRKDAIKKTIQQMTLGKDVSSLFPDVLKNIATIDVEQKKLVYLYVMNYAETHPELCILAVNTFITDAQDPNPLIRCMAIRTMSMIRVDKILEYIETPLRRTLHDDNAYVRKTAVICVAKLFQLNKDLCVELGVVEDLVNALDDSNPLVIANATAALIEIHNMDMDAVDLSSLIQSHVSQFLLALNECTEWARIIILGTLSEYSAKDSLEAQDIIDRVTAHLQHVNPAVVLATIKVIVRNLPQIEYSSNSLIMKRLSSAFVSLMSTPPEMQYVALKNIRIILEKYPELLTKELRIFYVKFNDPLYVKLEKIDILVRLVDPSNLKQCTLLLTELKEYAMEYEPEFVSRAIQALSQLGIKYAQESFVSKVLDILLELLERQDTIKDDCCISLCDLLRHCPGNDKMAKQVCAVFNTWSNPEVLLQSDIAKCNYVWLLGQHPNNFSDLESKINIFIENFVQEEALTQMSLLMTIVRLHATLTGSMLQSVLELATQQTHELDVRDMAMMYWRCLSMPNNESLVNDLCQNKLPMISNTLEKFSPEVLEKLLMELGTISSIYFKPDSNRRKGKKYVQNIVKGKHIEELESMAKNEISSKANDDVLLDFDERDDVTNTNAGMLNTLTTLGDLDDLFDFGPSEDATQINTNDTKAVQGLKELKLGGDSNGISSGGKNNPDVSGGNIVSQDLLDLF.

This sequence belongs to the adaptor complexes large subunit family. Adaptor protein complex 1 (AP-1) is a heterotetramer composed of two large adaptins (gamma-type subunit APL4 and beta-type subunit APL2), a medium adaptin (mu-type subunit APM1) and a small adaptin (sigma-type subunit APS1). Interacts with CHC1. Interacts with APM2, probably forming an alternative AP-1-like complex.

The protein localises to the cell membrane. Its subcellular location is the membrane. It localises to the coated pit. Functionally, adaptins are components of the adaptor complexes which link clathrin to receptors in coated vesicles. Clathrin-associated protein complexes are believed to interact with the cytoplasmic tails of membrane proteins, leading to their selection and concentration. The AP-1 complex interacts directly with clathrin. The chain is AP-1 complex subunit beta-1 (APL2) from Saccharomyces cerevisiae (strain ATCC 204508 / S288c) (Baker's yeast).